The primary structure comprises 324 residues: tRNA uridine(34) hydroxylase (324 aa).

The 95-residue stretch at 145 to 239 (NDKKTIFIDM…YVHDARKNGL (95 aa)) folds into the Rhodanese domain. Catalysis depends on Cys-199, which acts as the Cysteine persulfide intermediate.

This sequence belongs to the TrhO family.

The enzyme catalyses uridine(34) in tRNA + AH2 + O2 = 5-hydroxyuridine(34) in tRNA + A + H2O. In terms of biological role, catalyzes oxygen-dependent 5-hydroxyuridine (ho5U) modification at position 34 in tRNAs. The protein is tRNA uridine(34) hydroxylase of Buchnera aphidicola subsp. Acyrthosiphon pisum (strain APS) (Acyrthosiphon pisum symbiotic bacterium).